A 351-amino-acid chain; its full sequence is uncharacterized protein (351 aa).

The first 32 residues, 1 to 32 (MKNKKRVFIASSLSCVLLLLSAANTEANSANK), serve as a signal peptide directing secretion. A disordered region spans residues 26-74 (EANSANKDSQDQTKKEHVDKAQQKEKRNVNDKDKNTPGPDDIGKNGKVT). Basic and acidic residues predominate over residues 33 to 60 (DSQDQTKKEHVDKAQQKEKRNVNDKDKN).

Belongs to the aerolysin family.

This is an uncharacterized protein from Staphylococcus aureus (strain MRSA252).